The sequence spans 494 residues: NADPH:adrenodoxin oxidoreductase, mitochondrial (494 aa).

A mitochondrion-targeting transit peptide spans 1–34 (MAPRCWHWWRWSAWSGLRPSPSRSTPTPGFCQKF). FAD contacts are provided by Ala-51, Glu-72, Leu-80, and Val-116. Residues 187–190 (QGNV), 231–232 (RR), and Glu-243 contribute to the NADP(+) site. Position 313 is a phosphoserine (Ser-313). Residues Trp-401 and 408–410 (GVI) each bind FAD. Gly-408 contributes to the NADP(+) binding site.

Belongs to the ferredoxin--NADP reductase type 1 family. In terms of assembly, monomer. Interacts directly with FDX1. It depends on FAD as a cofactor. Expressed in the adrenal, testis and ovary and to a lesser extent in the liver and kidney.

The protein resides in the mitochondrion inner membrane. It catalyses the reaction 2 reduced [adrenodoxin] + NADP(+) + H(+) = 2 oxidized [adrenodoxin] + NADPH. The catalysed reaction is 2 reduced [2Fe-2S]-[ferredoxin] + NADP(+) + H(+) = 2 oxidized [2Fe-2S]-[ferredoxin] + NADPH. It functions in the pathway steroid metabolism; cholesterol metabolism. Serves as the first electron transfer protein in all the mitochondrial P450 systems including cholesterol side chain cleavage in all steroidogenic tissues, steroid 11-beta hydroxylation in the adrenal cortex, 25-OH-vitamin D3-24 hydroxylation in the kidney, and sterol C-27 hydroxylation in the liver. Also acts as a ferredoxin--NADP(+) reductase essential for coenzyme Q biosynthesis: together with FDX2, transfers the electrons required for the hydroxylation reaction performed by COQ6. The chain is NADPH:adrenodoxin oxidoreductase, mitochondrial (Fdxr) from Mus musculus (Mouse).